The following is a 911-amino-acid chain: Valine--tRNA ligase (911 aa).

The short motif at 57-67 (PTVSGSLHVGH) is the 'HIGH' region element. A 'KMSKS' region motif is present at residues 599-603 (KMSKS). Lysine 602 is a binding site for ATP. The disordered stretch occupies residues 882-911 (EESAAEDAPETEVAVEASELGEPPVKKPKH).

Belongs to the class-I aminoacyl-tRNA synthetase family. ValS type 2 subfamily. As to quaternary structure, monomer.

Its subcellular location is the cytoplasm. The enzyme catalyses tRNA(Val) + L-valine + ATP = L-valyl-tRNA(Val) + AMP + diphosphate. Its function is as follows. Catalyzes the attachment of valine to tRNA(Val). As ValRS can inadvertently accommodate and process structurally similar amino acids such as threonine, to avoid such errors, it has a 'posttransfer' editing activity that hydrolyzes mischarged Thr-tRNA(Val) in a tRNA-dependent manner. The chain is Valine--tRNA ligase from Bifidobacterium longum subsp. infantis (strain ATCC 15697 / DSM 20088 / JCM 1222 / NCTC 11817 / S12).